Reading from the N-terminus, the 279-residue chain is Zinc-finger homeodomain protein 1 (279 aa).

Residues 1–13 show a composition bias toward acidic residues; that stretch reads MDFDDHDDGDEEM. The interval 1–47 is disordered; sequence MDFDDHDDGDEEMPPMPVSSSYETPPQHGLAGGGMAPKPPGEIGSRV. The ZF-HD dimerization-type; degenerate zinc finger occupies 57–106; the sequence is YRECLKNHAVGIGGHAVDGCGEFMAAGEEGTIDALRCAACNCHRNFHRKE. The tract at residues 168–190 is disordered; the sequence is RPLALPSTSHSGRDDGDDLSGMV. The segment at residues 215–278 is a DNA-binding region (homeobox); sequence KKRFRTKFTQ…NNKHTLGKKL (64 aa).

Homo- and heterodimer with other ZFHD proteins.

Its subcellular location is the nucleus. Putative transcription factor. This is Zinc-finger homeodomain protein 1 (ZHD1) from Oryza sativa subsp. japonica (Rice).